Consider the following 99-residue polypeptide: A-type ATP synthase subunit F (99 aa).

The protein belongs to the V-ATPase F subunit family. In terms of assembly, has multiple subunits with at least A(3), B(3), C, D, E, F, H, I and proteolipid K(x).

The protein resides in the cell membrane. Component of the A-type ATP synthase that produces ATP from ADP in the presence of a proton gradient across the membrane. This is A-type ATP synthase subunit F from Methanocella arvoryzae (strain DSM 22066 / NBRC 105507 / MRE50).